A 618-amino-acid chain; its full sequence is F-box/LRR-repeat protein At3g58940 (618 aa).

The 47-residue stretch at 1–47 (MDRVSNLPEEVRCHILSFLPTKHAALTSVLSKSWLNLWKFETNLDID) folds into the F-box domain. LRR repeat units follow at residues 147-176 (LKLRSEHCVNWWHWDIGASLPNLKSLNIDS), 196-223 (EVHMANMEWRELDETMSSASLTKLSIHG), 224-249 (TGVEEFEHPKSISIDTPNLLYLNYSD), 282-313 (TLYLTEDTLEVLTMCCESMPVFNNLKTLGLKS), 314-339 (DEGRGWQAVPALLRNCPHLEFLIIEG), and 354-379 (CISREDKGRSLISCPVKKLEVRGFRG). Residues 587–618 (ATDSERAETSSNQEMTELGQATATYFPPREGE) form a disordered region. Positions 595-609 (TSSNQEMTELGQATA) are enriched in polar residues.

The protein is F-box/LRR-repeat protein At3g58940 of Arabidopsis thaliana (Mouse-ear cress).